The sequence spans 66 residues: Large ribosomal subunit protein bL31 (66 aa).

Zn(2+)-binding residues include C16, C18, C36, and C39.

Belongs to the bacterial ribosomal protein bL31 family. Type A subfamily. Part of the 50S ribosomal subunit. Requires Zn(2+) as cofactor.

Binds the 23S rRNA. This Trichlorobacter lovleyi (strain ATCC BAA-1151 / DSM 17278 / SZ) (Geobacter lovleyi) protein is Large ribosomal subunit protein bL31.